The primary structure comprises 323 residues: Aquaporin-4 (323 aa).

The Cytoplasmic segment spans residues 1 to 36 (MSDRPTARRWGKCGPLCTRENIMVAFKGVWTQAFWK). 2 S-palmitoyl cysteine lipidation sites follow: cysteine 13 and cysteine 17. Residues 37-57 (AVTAEFLAMLIFVLLSLGSTI) form a helical membrane-spanning segment. The Extracellular portion of the chain corresponds to 58 to 69 (NWGGTEKPLPVD). Residues 70 to 89 (MVLISLCFGLSIATMVQCFG) form a helical membrane-spanning segment. The Cytoplasmic segment spans residues 90–93 (HISG). The discontinuously helical intramembrane region spans 94–101 (GHINPAVT). The short motif at 97–99 (NPA) is the NPA 1 element. The Cytoplasmic portion of the chain corresponds to 102 to 115 (VAMVCTRKISIAKS). At serine 111 the chain carries Phosphoserine; by PKG. The chain crosses the membrane as a helical span at residues 116–136 (VFYIAAQCLGAIIGAGILYLV). Residues 137–155 (TPPSVVGGLGVTMVHGNLT) are Extracellular-facing. Residue asparagine 153 is glycosylated (N-linked (GlcNAc...) asparagine). The helical transmembrane segment at 156-176 (AGHGLLVELIITFQLVFTIFA) threads the bilayer. Topologically, residues 177–184 (SCDSKRTD) are cytoplasmic. Serine 180 carries the post-translational modification Phosphoserine; by PKC. The helical transmembrane segment at 185-205 (VTGSIALAIGFSVAIGHLFAI) threads the bilayer. Residue asparagine 206 is glycosylated (N-linked (GlcNAc...) asparagine). The Extracellular portion of the chain corresponds to 206-208 (NYT). Positions 209–222 (GASMNPARSFGPAV) form an intramembrane region, discontinuously helical. The short motif at 213 to 215 (NPA) is the NPA 2 element. Topologically, residues 223-231 (IMGNWENHW) are extracellular. A helical transmembrane segment spans residues 232-252 (IYWVGPIIGAVLAGGLYEYVF). Topologically, residues 253–323 (CPDVEFKRRF…DQSGEVLSSV (71 aa)) are cytoplasmic. Residues serine 276 and serine 285 each carry the phosphoserine modification. Threonine 289 bears the Phosphothreonine mark. Position 321 is a phosphoserine (serine 321).

It belongs to the MIP/aquaporin (TC 1.A.8) family. In terms of assembly, homotetramer. The tetramers can form oligomeric arrays in membranes. The size of the oligomers differs between tissues and is smaller in skeletal muscle than in brain. Interaction between AQP4 oligomeric arrays in close-by cells can contribute to cell-cell adhesion. Part of a complex containing MLC1, TRPV4, HEPACAM and ATP1B1. Phosphorylation by PKC at Ser-180 reduces conductance by 50%. Phosphorylation by PKG at Ser-111 in response to glutamate increases conductance by 40%. Post-translationally, isoform 2: Palmitoylated on its N-terminal region. Isoform 1: Not palmitoylated. Detected in skeletal muscle. Detected in stomach, along the glandular base region of the fundic gland (at protein level). Detected in brain, lung and skeletal muscle, and at much lower levels in heart and ovary.

Its subcellular location is the cell membrane. It is found in the basolateral cell membrane. The protein localises to the endosome membrane. It localises to the sarcolemma. The protein resides in the cell projection. The catalysed reaction is H2O(in) = H2O(out). In terms of biological role, forms a water-specific channel. Plays an important role in brain water homeostasis. It is involved in glymphatic solute transport and is required for a normal rate of water exchange across the blood brain interface. Required for normal levels of cerebrospinal fluid influx into the brain cortex and parenchyma along paravascular spaces that surround penetrating arteries, and for normal drainage of interstitial fluid along paravenous drainage pathways. Thereby, it is required for normal clearance of solutes from the brain interstitial fluid, including soluble beta-amyloid peptides derived from APP. Plays a redundant role in urinary water homeostasis and urinary concentrating ability. This is Aquaporin-4 (AQP4) from Homo sapiens (Human).